Reading from the N-terminus, the 234-residue chain is 7-cyano-7-deazaguanine synthase (234 aa).

Position 13–23 (13–23 (FSGGIDSTTCL)) interacts with ATP. Zn(2+)-binding residues include Cys-197, Cys-207, Cys-210, and Cys-213.

The protein belongs to the QueC family. Zn(2+) is required as a cofactor.

It catalyses the reaction 7-carboxy-7-deazaguanine + NH4(+) + ATP = 7-cyano-7-deazaguanine + ADP + phosphate + H2O + H(+). It functions in the pathway purine metabolism; 7-cyano-7-deazaguanine biosynthesis. Functionally, catalyzes the ATP-dependent conversion of 7-carboxy-7-deazaguanine (CDG) to 7-cyano-7-deazaguanine (preQ(0)). This chain is 7-cyano-7-deazaguanine synthase, found in Syntrophobacter fumaroxidans (strain DSM 10017 / MPOB).